We begin with the raw amino-acid sequence, 299 residues long: 4-hydroxybenzoate octaprenyltransferase (299 aa).

A run of 8 helical transmembrane segments spans residues Val-33–Val-53, Trp-56–Ile-76, Leu-107–Leu-127, Leu-151–Ile-171, Trp-180–Val-200, Ile-213–Leu-233, His-247–Ala-267, and Ala-278–Thr-298.

Belongs to the UbiA prenyltransferase family. Mg(2+) is required as a cofactor.

The protein resides in the cell inner membrane. It catalyses the reaction all-trans-octaprenyl diphosphate + 4-hydroxybenzoate = 4-hydroxy-3-(all-trans-octaprenyl)benzoate + diphosphate. The protein operates within cofactor biosynthesis; ubiquinone biosynthesis. Functionally, catalyzes the prenylation of para-hydroxybenzoate (PHB) with an all-trans polyprenyl group. Mediates the second step in the final reaction sequence of ubiquinone-8 (UQ-8) biosynthesis, which is the condensation of the polyisoprenoid side chain with PHB, generating the first membrane-bound Q intermediate 3-octaprenyl-4-hydroxybenzoate. This Xylella fastidiosa (strain M12) protein is 4-hydroxybenzoate octaprenyltransferase.